The following is a 534-amino-acid chain: EH domain-containing protein 1 (534 aa).

At Met-1 the chain carries N-acetylmethionine. Positions 55 to 286 (FDNKPMVLLV…DLFKDIQSLP (232 aa)) constitute a Dynamin-type G domain. Residues 65 to 72 (GQYSTGKT) form a G1 motif region. 65–72 (GQYSTGKT) contacts ATP. The interval 91-92 (EP) is G2 motif. Positions 153–156 (DTPG) are G3 motif. The stretch at 198–227 (DEFSEVIKALKNHEDKIRVVLNKADQIETQ) forms a coiled coil. Positions 219–222 (NKAD) are G4 motif. Residue Lys-220 coordinates ATP. Position 243 (Ile-243) is a region of interest, G5 motif. ATP is bound at residue Trp-258. An EH domain is found at 444 to 532 (DKPTYDEIFY…PHLVPPSKRR (89 aa)). At Ser-456 the chain carries Phosphoserine. The EF-hand domain occupies 476–511 (LPNTVLGKIWKLADVDRDGLLDDEEFALANHLIKVK). 4 residues coordinate Ca(2+): Asp-489, Asp-491, Asp-493, and Glu-500.

The protein belongs to the TRAFAC class dynamin-like GTPase superfamily. Dynamin/Fzo/YdjA family. EHD subfamily. As to quaternary structure, homooligomer, and heterooligomer with EHD2, EHD3 and EHD4, ATP-binding is required for heterooligomerization. Interacts (via EH domain) with MICALL1 (via NPF1 motif); the interaction is direct and recruits EHD1 to membranes. Interacts with RAB35; the interaction is indirect through MICALL1 and recruits EHD1 to membranes. Interacts (via EH domain) with PACSIN2 (via NPF motifs); regulates localization to tubular recycling endosome membranes. Interacts with PACSIN1. Interacts with RAB8A. Interacts with FER1L5 (via second C2 domain). Interacts with MYOF. Interacts with ZFYVE20. Interacts (via EH domain) with RAB11FIP2.

The protein localises to the recycling endosome membrane. It is found in the early endosome membrane. It localises to the cell membrane. Its subcellular location is the cell projection. The protein resides in the cilium membrane. ATP- and membrane-binding protein that controls membrane reorganization/tubulation upon ATP hydrolysis. Acts in early endocytic membrane fusion and membrane trafficking of recycling endosomes. Recruited to endosomal membranes upon nerve growth factor stimulation, indirectly regulates neurite outgrowth. Plays a role in myoblast fusion. Involved in the unidirectional retrograde dendritic transport of endocytosed BACE1 and in efficient sorting of BACE1 to axons implicating a function in neuronal APP processing. Plays a role in the formation of the ciliary vesicle (CV), an early step in cilium biogenesis. Proposed to be required for the fusion of distal appendage vesicles (DAVs) to form the CV by recruiting SNARE complex component SNAP29. Is required for recruitment of transition zone proteins CEP290, RPGRIP1L, TMEM67 and B9D2, and of IFT20 following DAV reorganization before Rab8-dependent ciliary membrane extension. Required for the loss of CCP110 form the mother centriole essential for the maturation of the basal body during ciliogenesis. The sequence is that of EH domain-containing protein 1 from Bos taurus (Bovine).